Reading from the N-terminus, the 28-residue chain is Cysteine-rich venom protein asurin-2 (28 aa).

Residues 1–15 show a composition bias toward basic and acidic residues; sequence SNKKDYRKEIVDKHN. Residues 1–28 form a disordered region; it reads SNKKDYRKEIVDKHNALSRSVKPTASNM. The segment covering 17 to 28 has biased composition (polar residues); that stretch reads LSRSVKPTASNM.

It belongs to the CRISP family. In terms of processing, contains 8 disulfide bonds. Expressed by the venom gland.

It localises to the secreted. Functionally, blocks contraction of smooth muscle elicited by high potassium-induced depolarization, but does not block caffeine-stimulated contraction. May target voltage-gated calcium channels on smooth muscle. This Austrelaps superbus (Lowland copperhead snake) protein is Cysteine-rich venom protein asurin-2.